A 213-amino-acid chain; its full sequence is Kynurenine formamidase (213 aa).

A substrate-binding site is contributed by Trp-18. Positions 48, 52, and 54 each coordinate Zn(2+). The active-site Proton donor/acceptor is His-58. Zn(2+) contacts are provided by His-160 and Glu-172.

This sequence belongs to the Cyclase 1 superfamily. KynB family. In terms of assembly, homodimer. The cofactor is Zn(2+).

It catalyses the reaction N-formyl-L-kynurenine + H2O = L-kynurenine + formate + H(+). It functions in the pathway amino-acid degradation; L-tryptophan degradation via kynurenine pathway; L-kynurenine from L-tryptophan: step 2/2. Catalyzes the hydrolysis of N-formyl-L-kynurenine to L-kynurenine, the second step in the kynurenine pathway of tryptophan degradation. The protein is Kynurenine formamidase of Burkholderia pseudomallei (strain 1106a).